The primary structure comprises 887 residues: PAN2-PAN3 deadenylation complex subunit Pan3 (887 aa).

The segment at Gly-49 to Pro-77 adopts a C3H1-type zinc-finger fold. Disordered stretches follow at residues Gly-111–Gly-139, Glu-280–Ser-307, and Pro-321–Ile-393. The tract at residues Met-147 to Ser-498 is necessary and sufficient for interaction with PABPC1 but not needed for interaction with PAN2. Composition is skewed to polar residues over residues Asn-281–Ala-290 and Gly-298–Ser-307. Positions Gln-284–Ser-299 match the PABPC-interacting motif-2 (PAM-2) motif. A phosphoserine mark is found at Ser-354 and Ser-361. The interval Gln-463–Gly-750 is pseudokinase domain. Residues Arg-521, Asp-570–Thr-577, and Thr-644–Lys-645 each bind ATP. The segment at Thr-789–Leu-887 is knob domain.

It belongs to the protein kinase superfamily. PAN3 family. Homodimer. Forms a heterotrimer with a catalytic subunit PAN2 to form the poly(A)-nuclease (PAN) deadenylation complex. Interacts (via PAM-2 motif) with poly(A)-binding protein PABPC1 (via PABC domain), conferring substrate specificity of the enzyme complex. Interacts with the GW182 family proteins TNRC6A, TNRC6B and TNRC6C. Interacts with YTHDF3. As to quaternary structure, interacts with PAN2. Interacts (via N-terminus) with PABPC1 at lower efficiency than isoform 3. In terms of assembly, interacts with PAN2. Interacts (via N-terminus) with PABPC1 at higher efficiency than isoform 1.

Its subcellular location is the cytoplasm. The protein resides in the P-body. The protein localises to the nucleus. In terms of biological role, regulatory subunit of the poly(A)-nuclease (PAN) deadenylation complex, one of two cytoplasmic mRNA deadenylases involved in general and miRNA-mediated mRNA turnover. PAN specifically shortens poly(A) tails of RNA and the activity is stimulated by poly(A)-binding protein (PABP). PAN deadenylation is followed by rapid degradation of the shortened mRNA tails by the CCR4-NOT complex. Deadenylated mRNAs are then degraded by two alternative mechanisms, namely exosome-mediated 3'-5' exonucleolytic degradation, or deadenylation-dependent mRNA decapping and subsequent 5'-3' exonucleolytic degradation by XRN1. PAN3 acts as a regulator for PAN activity, recruiting the catalytic subunit PAN2 to mRNA via its interaction with RNA and PABP, and to miRNA targets via its interaction with GW182 family proteins. Decreases PAN2-mediated deadenylation, possibly by preventing progression into the second CCR4-NOT mediated stage of biphasic deadenylation. Has a significant effect on mRNA stability, generally stabilizing a subset of the transcriptome. Stabilizes mRNAs degraded by the AU-rich element (ARE)-mediated mRNA decay pathway but promotes degradation of mRNAs by the microRNA-mediated pathway. Its activity influences mRNP remodeling, specifically reducing formation of a subset of P-bodies containing GW220, an isoform of TNRC6A. Its function is as follows. Enhances PAN2 deadenylase activity and has an extensive effect on mRNA stability, generally enhancing mRNA decay across the transcriptome by multiple pathways, including the AU-rich element (ARE)-mediated pathway, microRNA-mediated pathway and the nonsense-mediated pathway (NMD). Its activity is required for efficient P-body formation. May be involved in regulating mRNAs of genes involved in cell cycle progression and cell proliferation. This Mus musculus (Mouse) protein is PAN2-PAN3 deadenylation complex subunit Pan3.